The primary structure comprises 689 residues: Glycine--tRNA ligase beta subunit (689 aa).

The protein belongs to the class-II aminoacyl-tRNA synthetase family. Tetramer of two alpha and two beta subunits.

The protein localises to the cytoplasm. It catalyses the reaction tRNA(Gly) + glycine + ATP = glycyl-tRNA(Gly) + AMP + diphosphate. The protein is Glycine--tRNA ligase beta subunit of Edwardsiella ictaluri (strain 93-146).